We begin with the raw amino-acid sequence, 857 residues long: Alanine--tRNA ligase (857 aa).

Zn(2+) contacts are provided by H556, H560, C658, and H662.

Belongs to the class-II aminoacyl-tRNA synthetase family. Zn(2+) serves as cofactor.

It localises to the cytoplasm. It carries out the reaction tRNA(Ala) + L-alanine + ATP = L-alanyl-tRNA(Ala) + AMP + diphosphate. In terms of biological role, catalyzes the attachment of alanine to tRNA(Ala) in a two-step reaction: alanine is first activated by ATP to form Ala-AMP and then transferred to the acceptor end of tRNA(Ala). Also edits incorrectly charged Ser-tRNA(Ala) and Gly-tRNA(Ala) via its editing domain. In Sulfurovum sp. (strain NBC37-1), this protein is Alanine--tRNA ligase.